The primary structure comprises 143 residues: Large ribosomal subunit protein uL11 (143 aa).

It belongs to the universal ribosomal protein uL11 family. Part of the ribosomal stalk of the 50S ribosomal subunit. Interacts with L10 and the large rRNA to form the base of the stalk. L10 forms an elongated spine to which L12 dimers bind in a sequential fashion forming a multimeric L10(L12)X complex. In terms of processing, one or more lysine residues are methylated.

Its function is as follows. Forms part of the ribosomal stalk which helps the ribosome interact with GTP-bound translation factors. This Paraburkholderia xenovorans (strain LB400) protein is Large ribosomal subunit protein uL11.